Reading from the N-terminus, the 455-residue chain is N(5)-hydroxyornithine:cis-anhydromevalonyl coenzyme A-N(5)-transacylase SIDF (455 aa).

The PTS1-type peroxisomal targeting signal signature appears at 453–455 (PKL).

The protein belongs to the lysine N-acyltransferase mbtK family.

It localises to the peroxisome. It participates in siderophore biosynthesis. Its function is as follows. Hydroxyornithine transacylase; part of the gene cluster that mediates the biosynthesis of at least 11 siderophores, including beauverichelin A, dimerumic acid (DA), Na-dimethyl coprogen (NADC), eleutherazine B, ferricrocin (FC), fusarinine A, fusarinine C (FsC), metachelin A, mevalonolactone, rhodotorulic acid (RA) and tenellin. This cocktail of siderophores for iron metabolism is essential for virulence, and more specifically for the fungal virulence in penetrating through the host cuticle. Siderophore synthesis is also involved in conidial germination under iron-deficient conditions. For biosynthesis of fusarinine C, the transacylase SIDF transfers anhydromevalonyl to N(5)-hydroxyornithine. The required anhydromevalonyl-CoA moiety is derived from mevalonate by CoA ligation and dehydration catalyzed by SIDI and sidH respectively. This Beauveria bassiana (strain ARSEF 2860) (White muscardine disease fungus) protein is N(5)-hydroxyornithine:cis-anhydromevalonyl coenzyme A-N(5)-transacylase SIDF.